The sequence spans 115 residues: Large ribosomal subunit protein bL19 (115 aa).

This sequence belongs to the bacterial ribosomal protein bL19 family.

Its function is as follows. This protein is located at the 30S-50S ribosomal subunit interface and may play a role in the structure and function of the aminoacyl-tRNA binding site. This chain is Large ribosomal subunit protein bL19, found in Shouchella clausii (strain KSM-K16) (Alkalihalobacillus clausii).